A 132-amino-acid polypeptide reads, in one-letter code: Small ribosomal subunit protein uS8 (132 aa).

The protein belongs to the universal ribosomal protein uS8 family. As to quaternary structure, part of the 30S ribosomal subunit. Contacts proteins S5 and S12.

In terms of biological role, one of the primary rRNA binding proteins, it binds directly to 16S rRNA central domain where it helps coordinate assembly of the platform of the 30S subunit. This Caldanaerobacter subterraneus subsp. tengcongensis (strain DSM 15242 / JCM 11007 / NBRC 100824 / MB4) (Thermoanaerobacter tengcongensis) protein is Small ribosomal subunit protein uS8 (rpsH).